Consider the following 900-residue polypeptide: Probable beta-mannosidase (900 aa).

A signal peptide spans 1 to 21 (MRTSLVVCLFWLLFQLHTTHG). 3 N-linked (GlcNAc...) asparagine glycosylation sites follow: Asn38, Asn42, and Asn131. The Proton donor role is filled by Glu463. N-linked (GlcNAc...) asparagine glycosylation is found at Asn477, Asn576, Asn661, and Asn738.

Belongs to the glycosyl hydrolase 2 family.

It is found in the lysosome. The enzyme catalyses Hydrolysis of terminal, non-reducing beta-D-mannose residues in beta-D-mannosides.. The protein is Probable beta-mannosidase of Caenorhabditis elegans.